Reading from the N-terminus, the 145-residue chain is uncharacterized protein (145 aa).

Belongs to the methyltransferase superfamily.

Functionally, probable methyltransferase. This is an uncharacterized protein from Schizosaccharomyces pombe (strain 972 / ATCC 24843) (Fission yeast).